Reading from the N-terminus, the 449-residue chain is C4-dicarboxylate transport protein (449 aa).

Helical transmembrane passes span 18–38 (PFYL…ALLG), 61–81 (MIIS…VAHV), 93–113 (VYFL…AHVV), 159–179 (FVGD…IALA), 202–222 (LVQM…AFTI), 244–264 (SLLF…FSIL), 311–331 (GYSF…LFIA), and 369–389 (AATL…ILGV).

Belongs to the dicarboxylate/amino acid:cation symporter (DAACS) (TC 2.A.23) family.

It is found in the cell inner membrane. In terms of biological role, responsible for the transport of dicarboxylates such as succinate, fumarate, and malate from the periplasm across the membrane. This chain is C4-dicarboxylate transport protein, found in Xylella fastidiosa (strain M12).